The following is a 112-amino-acid chain: MTMNSFERRNKIIQLVNEQGTVLVQDLAGVFAASEATIRADLRFLEQKGVVTRFHGGAAKIMSGNSETETQEVGFKERFQLASAPKNRIAQAAVKMIHEGMTDPTHVIWTQA.

The HTH deoR-type domain maps to 5–60 (SFERRNKIIQLVNEQGTVLVQDLAGVFAASEATIRADLRFLEQKGVVTRFHGGAAK). Positions 22–41 (VLVQDLAGVFAASEATIRAD) form a DNA-binding region, H-T-H motif.

Functionally, repressor of the gat operon for galacticol transport and metabolism. In K12 strains the operon is constitutively expressed because this gene is inactive. The chain is Putative galactitol utilization operon repressor (gatR) from Escherichia coli (strain K12).